The chain runs to 265 residues: Glutamate racemase (265 aa).

Residues 7–8 (DS) and 39–40 (YG) contribute to the substrate site. Cysteine 71 functions as the Proton donor/acceptor in the catalytic mechanism. Substrate is bound at residue 72–73 (NT). The active-site Proton donor/acceptor is the cysteine 184. 185 to 186 (TH) is a binding site for substrate.

This sequence belongs to the aspartate/glutamate racemases family.

The catalysed reaction is L-glutamate = D-glutamate. The protein operates within cell wall biogenesis; peptidoglycan biosynthesis. Its function is as follows. Provides the (R)-glutamate required for cell wall biosynthesis. This is Glutamate racemase from Sulfurovum sp. (strain NBC37-1).